The primary structure comprises 687 residues: MRDPVFTGTAMAYHPFHAHRPTDFPMSAFLAAAQPSFFPALTLPPGALTKPIPDHTLAGAAEAGLHPALSHHHQAAHLRSLKSLEPEEEVEDDPKVTLEAKDLWDQFHKLGTEMVITKSGRRMFPPFKVRINGLDKKAKYILLMDIVAADDCRYKFHNSRWMVAGKADPEMPKRMYIHPDSPATGEQWMAKPVAFHKLKLTNNISDKHGFTILNSMHKYQPRFHIVRANDILKLPYSTFRTYVFPETDFIAVTAYQNDKITQLKIDNNPFAKGFRDTGNGRREKRKQLTLPSLRMYEDQCKVDRDGADSDASSSEPTTGRDAGHSPGPVSSPLRFNRGSRDDKTCTDSEHEMDHQNDRCGGSSSPAPEPSSPFRSRSEDWGREKPIAEKKDDYPDSRKTSDSIFSIRNLEKDKLESRSRKDTDSSKKDTENSGISGSKDSFSPLMVQTESPSHFGAGHLQSLALSGLHSQQFFNPLNTGQPLLFHPGQFAMAPGAFSAMGMGHLLASVSGAGGLENGSLSAQGTGSTPSPFPFHLSQHMLASQGIPMPTFGGLFPYPYTYMAAAAAAASALPASSSTASSLSRNPFLSSSTRPRLRFNPYQLPVSIPQSTNLLTTGLPSGLNPSSESSKCGSREASPVPDHKSGASQRNGSPKTTMKESINELQNIQRLVSGLESQRETSSPRDSPK.

A DNA-binding region (T-box) is located at residues 103–276 (LWDQFHKLGT…NNPFAKGFRD (174 aa)). Disordered regions lie at residues 303–452 (DRDG…ESPS) and 611–687 (NLLT…DSPK). 3 stretches are compositionally biased toward basic and acidic residues: residues 338–357 (GSRDDKTCTDSEHEMDHQND), 375–400 (SRSEDWGREKPIAEKKDDYPDSRKTS), and 408–430 (NLEKDKLESRSRKDTDSSKKDTE). Composition is skewed to polar residues over residues 431–451 (NSGISGSKDSFSPLMVQTESP), 611–630 (NLLTTGLPSGLNPSSESSKC), and 644–654 (GASQRNGSPKT). Residues 654–681 (TTMKESINELQNIQRLVSGLESQRETSS) adopt a coiled-coil conformation. Basic and acidic residues predominate over residues 675–687 (SQRETSSPRDSPK).

As to quaternary structure, binds DNA as a monomer. As to expression, expressed in the axial mesoderm, notably, in the notochordal precursor cells immediately before formation of the notochord and in the chordoneural hinge of the tail bud, after the notochord is formed. In addition, its expression is detected in the ventral forebrain, sensory neurons, fin buds and excretory system.

It is found in the nucleus. Transcription factor which acts as a transcriptional repressor. May also function as a transcriptional activator. Binds to the palindromic T site 5'-TTCACACCTAGGTGTGAA-3' DNA sequence, or a half-site, which are present in the regulatory region of several genes. Involved in the transcriptional regulation of genes required for mesoderm differentiation. Plays a role in the specification of late notochordal precursor cells and formation of the differentiated notochord. Required for cardiac atrioventricular canal formation. In Danio rerio (Zebrafish), this protein is T-box transcription factor TBX2b (tbx2b).